Reading from the N-terminus, the 64-residue chain is Large ribosomal subunit protein bL28 (64 aa).

Residues 1-27 (MAKRDQLTGKGPLSGNTRSHAMNHSKR) are disordered.

It belongs to the bacterial ribosomal protein bL28 family.

This is Large ribosomal subunit protein bL28 from Ureaplasma parvum serovar 3 (strain ATCC 27815 / 27 / NCTC 11736).